Reading from the N-terminus, the 370-residue chain is Putative agmatine deiminase (370 aa).

C361 (amidino-cysteine intermediate) is an active-site residue.

The protein belongs to the agmatine deiminase family.

It catalyses the reaction agmatine + H2O = N-carbamoylputrescine + NH4(+). This Shewanella putrefaciens (strain CN-32 / ATCC BAA-453) protein is Putative agmatine deiminase.